Reading from the N-terminus, the 91-residue chain is Large ribosomal subunit protein uL23c (91 aa).

The protein belongs to the universal ribosomal protein uL23 family. In terms of assembly, part of the 50S ribosomal subunit.

It localises to the plastid. The protein resides in the chloroplast. Its function is as follows. Binds to 23S rRNA. This Chaetosphaeridium globosum (Charophycean green alga) protein is Large ribosomal subunit protein uL23c (rpl23).